Here is a 413-residue protein sequence, read N- to C-terminus: Mitochondrial carrier protein MTM1 (413 aa).

Solcar repeat units follow at residues 59–193 (IGFT…FRNR), 205–305 (MTFC…IKKR), and 318–406 (GVFG…VKYV). 6 helical membrane-spanning segments follow: residues 65 to 85 (VFSA…LDVV), 170 to 190 (NAGL…YDMF), 204 to 226 (AMTF…TVCY), 284 to 304 (QLAR…PIKK), 316 to 336 (LVGV…IAAA), and 378 to 399 (LFMG…VVSF).

This sequence belongs to the mitochondrial carrier (TC 2.A.29) family. In terms of tissue distribution, ubiquitous.

The protein resides in the mitochondrion inner membrane. Functionally, involved in the mitochondrial activation of MSD1 by specifically facilitating insertion of the essential manganese cofactor. Has the ability to activate iron regulon in an iron-dependent manner. This chain is Mitochondrial carrier protein MTM1 (MTM1), found in Arabidopsis thaliana (Mouse-ear cress).